Here is a 156-residue protein sequence, read N- to C-terminus: Arginine repressor (156 aa).

Belongs to the ArgR family.

The protein localises to the cytoplasm. It functions in the pathway amino-acid biosynthesis; L-arginine biosynthesis [regulation]. Functionally, regulates arginine biosynthesis genes. This is Arginine repressor from Shigella boydii serotype 18 (strain CDC 3083-94 / BS512).